Consider the following 334-residue polypeptide: Aspartate carbamoyltransferase catalytic subunit (334 aa).

Carbamoyl phosphate contacts are provided by Arg-70 and Thr-71. Residue Lys-98 coordinates L-aspartate. Residues Arg-120, His-150, and Gln-153 each contribute to the carbamoyl phosphate site. 2 residues coordinate L-aspartate: Arg-183 and Arg-238. 2 residues coordinate carbamoyl phosphate: Gly-279 and Pro-280.

Belongs to the aspartate/ornithine carbamoyltransferase superfamily. ATCase family. In terms of assembly, heterododecamer (2C3:3R2) of six catalytic PyrB chains organized as two trimers (C3), and six regulatory PyrI chains organized as three dimers (R2).

It carries out the reaction carbamoyl phosphate + L-aspartate = N-carbamoyl-L-aspartate + phosphate + H(+). It functions in the pathway pyrimidine metabolism; UMP biosynthesis via de novo pathway; (S)-dihydroorotate from bicarbonate: step 2/3. Its function is as follows. Catalyzes the condensation of carbamoyl phosphate and aspartate to form carbamoyl aspartate and inorganic phosphate, the committed step in the de novo pyrimidine nucleotide biosynthesis pathway. The chain is Aspartate carbamoyltransferase catalytic subunit from Marinomonas sp. (strain MWYL1).